Consider the following 478-residue polypeptide: Sulfate adenylyltransferase subunit 1 (478 aa).

A tr-type G domain is found at Lys-24–Asp-240. Residues Gly-33–Ser-40 are G1. Gly-33–Ser-40 is a GTP binding site. Residues Gly-91–Asp-95 are G2. Residues Asp-112–Gly-115 are G3. Residues Asp-112–His-116 and Asn-167–Asp-170 contribute to the GTP site. The tract at residues Asn-167–Asp-170 is G4. A G5 region spans residues Ser-206–Leu-208.

Belongs to the TRAFAC class translation factor GTPase superfamily. Classic translation factor GTPase family. CysN/NodQ subfamily. As to quaternary structure, heterodimer composed of CysD, the smaller subunit, and CysN.

It carries out the reaction sulfate + ATP + H(+) = adenosine 5'-phosphosulfate + diphosphate. The protein operates within sulfur metabolism; hydrogen sulfide biosynthesis; sulfite from sulfate: step 1/3. Functionally, with CysD forms the ATP sulfurylase (ATPS) that catalyzes the adenylation of sulfate producing adenosine 5'-phosphosulfate (APS) and diphosphate, the first enzymatic step in sulfur assimilation pathway. APS synthesis involves the formation of a high-energy phosphoric-sulfuric acid anhydride bond driven by GTP hydrolysis by CysN coupled to ATP hydrolysis by CysD. The sequence is that of Sulfate adenylyltransferase subunit 1 from Aliivibrio fischeri (strain MJ11) (Vibrio fischeri).